The sequence spans 271 residues: Putative hydro-lyase jk0403 (271 aa).

It belongs to the D-glutamate cyclase family.

The chain is Putative hydro-lyase jk0403 from Corynebacterium jeikeium (strain K411).